A 339-amino-acid polypeptide reads, in one-letter code: NADH-quinone oxidoreductase subunit H (339 aa).

A run of 9 helical transmembrane segments spans residues 9–29, 50–70, 82–102, 115–135, 161–181, 187–207, 235–255, 275–295, and 311–331; these read IFPL…LILC, PNVV…KLLF, ILFI…WAVI, VGVL…IIAG, MGLV…SGII, MPWW…ISVL, MGFA…SAMT, IPGF…FLWI, and GWKV…SVLV.

The protein belongs to the complex I subunit 1 family. NDH-1 is composed of 14 different subunits. Subunits NuoA, H, J, K, L, M, N constitute the membrane sector of the complex.

The protein localises to the cell inner membrane. It catalyses the reaction a quinone + NADH + 5 H(+)(in) = a quinol + NAD(+) + 4 H(+)(out). In terms of biological role, NDH-1 shuttles electrons from NADH, via FMN and iron-sulfur (Fe-S) centers, to quinones in the respiratory chain. The immediate electron acceptor for the enzyme in this species is believed to be ubiquinone. Couples the redox reaction to proton translocation (for every two electrons transferred, four hydrogen ions are translocated across the cytoplasmic membrane), and thus conserves the redox energy in a proton gradient. This subunit may bind ubiquinone. This is NADH-quinone oxidoreductase subunit H from Rickettsia felis (strain ATCC VR-1525 / URRWXCal2) (Rickettsia azadi).